The sequence spans 627 residues: tRNA uridine 5-carboxymethylaminomethyl modification enzyme MnmG (627 aa).

FAD contacts are provided by residues 13–18, Val-125, and Ser-180; that span reads GGGHAG. 274–288 serves as a coordination point for NAD(+); sequence GPRYCPSIEDKVVRF. Gln-371 contributes to the FAD binding site.

It belongs to the MnmG family. In terms of assembly, homodimer. Heterotetramer of two MnmE and two MnmG subunits. FAD is required as a cofactor.

The protein resides in the cytoplasm. NAD-binding protein involved in the addition of a carboxymethylaminomethyl (cmnm) group at the wobble position (U34) of certain tRNAs, forming tRNA-cmnm(5)s(2)U34. In Francisella tularensis subsp. novicida (strain U112), this protein is tRNA uridine 5-carboxymethylaminomethyl modification enzyme MnmG.